Reading from the N-terminus, the 324-residue chain is Ribose-phosphate pyrophosphokinase (324 aa).

Residues 45–47 and 104–105 each bind ATP; these read NGE and RQ. H138 and D178 together coordinate Mg(2+). The active site involves K201. D-ribose 5-phosphate is bound by residues R203, D229, and 233–237; that span reads DTGGT.

It belongs to the ribose-phosphate pyrophosphokinase family. Class I subfamily. In terms of assembly, homohexamer. Mg(2+) is required as a cofactor.

It localises to the cytoplasm. The catalysed reaction is D-ribose 5-phosphate + ATP = 5-phospho-alpha-D-ribose 1-diphosphate + AMP + H(+). It participates in metabolic intermediate biosynthesis; 5-phospho-alpha-D-ribose 1-diphosphate biosynthesis; 5-phospho-alpha-D-ribose 1-diphosphate from D-ribose 5-phosphate (route I): step 1/1. Functionally, involved in the biosynthesis of the central metabolite phospho-alpha-D-ribosyl-1-pyrophosphate (PRPP) via the transfer of pyrophosphoryl group from ATP to 1-hydroxyl of ribose-5-phosphate (Rib-5-P). This is Ribose-phosphate pyrophosphokinase from Streptomyces avermitilis (strain ATCC 31267 / DSM 46492 / JCM 5070 / NBRC 14893 / NCIMB 12804 / NRRL 8165 / MA-4680).